The primary structure comprises 452 residues: MAGYLRAVSSLCRASGSARTWAPAALTVPSWPEQPRRHYAEKRIKVEKPVVEMDGDEMTRIIWQFIKEKLILPHVDVQLKYFDLGLPNRDQTNDQVTIDSALATQKYSVAVKCATITPDEARVEEFKLKKMWKSPNGTIRNILGGTVFREPIICKNIPRLVPGWTKPITIGRHAHGDQYKATDFVVDRAGTFKLVFTPKDGSSAKEWEVYNFPAGGVGMGMYNTDESISGFAHSCFQYSIQKKWPLYLSTKNTILKAYDGRFKDIFQEIFDKHYKTDFDKNKIWYEHRLIDDMVAQVLKSSGGFVWACKNYDGDVQSDILAQGFGSLGLMTSVLVCPDGKTIEAEAAHGTVTRHYREHQKGRPTSTNPIASIFAWTRGLEHRGKLDGNQDLIRFAQTLEKVCVQTVESGAMTKDLAGCIHGLSNVKLNEHFLNTTDFLDTIKSNLDRALGKQ.

A mitochondrion-targeting transit peptide spans 1 to 39 (MAGYLRAVSSLCRASGSARTWAPAALTVPSWPEQPRRHY). Residues lysine 45, lysine 48, lysine 67, and lysine 69 each carry the N6-acetyllysine modification. N6-acetyllysine; alternate is present on residues lysine 80 and lysine 106. 2 positions are modified to N6-succinyllysine; alternate: lysine 80 and lysine 106. NADP(+) contacts are provided by residues 115 to 117 (TIT) and arginine 122. Residue threonine 117 coordinates D-threo-isocitrate. D-threo-isocitrate contacts are provided by residues 134 to 140 (SPNGTIR) and arginine 149. Lysine 155 bears the N6-acetyllysine mark. Lysine 166 is modified (N6-acetyllysine; alternate). Lysine 166 is modified (N6-succinyllysine; alternate). Position 172 (arginine 172) interacts with D-threo-isocitrate. N6-acetyllysine; alternate occurs at positions 180 and 193. 2 positions are modified to N6-succinyllysine; alternate: lysine 180 and lysine 193. At lysine 199 the chain carries N6-acetyllysine. An N6-acetyllysine; alternate modification is found at lysine 256. Residue lysine 256 is modified to N6-succinyllysine; alternate. Residues lysine 263, lysine 272, lysine 275, and lysine 280 each carry the N6-acetyllysine modification. Lysine 282 is modified (N6-acetyllysine; alternate). Lysine 282 is modified (N6-succinyllysine; alternate). Residue aspartate 291 coordinates Mn(2+). NADP(+) is bound at residue lysine 299. Aspartate 314 contacts Mn(2+). Residues 349–354 (GTVTRH) and asparagine 367 each bind NADP(+). Lysine 384 is subject to N6-acetyllysine; alternate. Residue lysine 384 is modified to N6-succinyllysine; alternate. N6-acetyllysine is present on residues lysine 400, lysine 413, and lysine 442.

The protein belongs to the isocitrate and isopropylmalate dehydrogenases family. Homodimer. It depends on Mg(2+) as a cofactor. Requires Mn(2+) as cofactor. Acetylation at Lys-413 dramatically reduces catalytic activity. Deacetylated by SIRT3. As to expression, predominantly expressed in heart, liver and kidney. Expressed in activated B lymphocytes.

The protein resides in the mitochondrion. It catalyses the reaction D-threo-isocitrate + NADP(+) = 2-oxoglutarate + CO2 + NADPH. In terms of biological role, plays a role in intermediary metabolism and energy production. It may tightly associate or interact with the pyruvate dehydrogenase complex. The polypeptide is Isocitrate dehydrogenase [NADP], mitochondrial (Idh2) (Mus musculus (Mouse)).